The following is a 98-amino-acid chain: NADH-ubiquinone oxidoreductase chain 4L (98 aa).

3 consecutive transmembrane segments (helical) span residues 1 to 21, 29 to 49, and 61 to 81; these read MSLI…GLLM, ALLC…LTIL, and IILL…LVMI.

It belongs to the complex I subunit 4L family. In terms of assembly, core subunit of respiratory chain NADH dehydrogenase (Complex I) which is composed of 45 different subunits.

The protein resides in the mitochondrion inner membrane. The catalysed reaction is a ubiquinone + NADH + 5 H(+)(in) = a ubiquinol + NAD(+) + 4 H(+)(out). Functionally, core subunit of the mitochondrial membrane respiratory chain NADH dehydrogenase (Complex I) which catalyzes electron transfer from NADH through the respiratory chain, using ubiquinone as an electron acceptor. Part of the enzyme membrane arm which is embedded in the lipid bilayer and involved in proton translocation. The protein is NADH-ubiquinone oxidoreductase chain 4L (MT-ND4L) of Platanista minor (Indus river dolphin).